The chain runs to 85 residues: U4-theraphotoxin-Hhn1s (85 aa).

An N-terminal signal peptide occupies residues 1–22; it reads MKVTLIAILTCAAVLVLHTTAA. Residues 23-48 constitute a propeptide that is removed on maturation; it reads EELEAESQLMEVGMPDTELAAVDEER. Cystine bridges form between Cys52–Cys66, Cys56–Cys77, and Cys71–Cys82.

It belongs to the neurotoxin 12 (Hwtx-2) family. 02 (Hwtx-2) subfamily. In terms of tissue distribution, expressed by the venom gland.

It localises to the secreted. Its function is as follows. Postsynaptic neurotoxin. This Cyriopagopus hainanus (Chinese bird spider) protein is U4-theraphotoxin-Hhn1s.